The primary structure comprises 597 residues: ATP-dependent lipid A-core flippase (597 aa).

The next 6 helical transmembrane spans lie at 26-46 (WIFAASIITMAIYAATETGLA), 65-85 (IQIIPLLLIGLFVIRGGANFI), 144-164 (ILTIIRDSLTILGLLAWMAYL), 166-186 (GLLTLIILVTAPLIALIIWWV), 250-270 (AISQPVVQLIAVLGLAGVIHL), and 276-296 (MLAQISVGTFISFITAMMLLL). The 283-residue stretch at 29 to 311 (AASIITMAIY…LTKINGTLQR (283 aa)) folds into the ABC transmembrane type-1 domain. In terms of domain architecture, ABC transporter spans 343–579 (IRFEHLSFCY…ESHYAGLYRL (237 aa)). 377–384 (GHSGSGKS) lines the ATP pocket.

It belongs to the ABC transporter superfamily. Lipid exporter (TC 3.A.1.106) family. As to quaternary structure, homodimer.

It localises to the cell inner membrane. The catalysed reaction is ATP + H2O + lipid A-core oligosaccharideSide 1 = ADP + phosphate + lipid A-core oligosaccharideSide 2.. Its function is as follows. Involved in lipopolysaccharide (LPS) biosynthesis. Translocates lipid A-core from the inner to the outer leaflet of the inner membrane. Transmembrane domains (TMD) form a pore in the inner membrane and the ATP-binding domain (NBD) is responsible for energy generation. The sequence is that of ATP-dependent lipid A-core flippase from Nitrosococcus oceani (strain ATCC 19707 / BCRC 17464 / JCM 30415 / NCIMB 11848 / C-107).